We begin with the raw amino-acid sequence, 57 residues long: Probable antitoxin MazE1 (57 aa).

Forms a complex with cognate toxin MazF1.

In terms of biological role, antitoxin component of a type II toxin-antitoxin (TA) system. This Mycobacterium tuberculosis (strain ATCC 25618 / H37Rv) protein is Probable antitoxin MazE1 (mazE1).